A 202-amino-acid chain; its full sequence is MSDTPVIGVLALQGDVREHLVALAVADAVARPVRRPEELAEVDGLVLPGGESTTISKLAVLFGVMDPLRARVRDGMPVYGTCAGMIMLADKILDPRSGQETVGGIDMIVRRNAFGRQNESFEAAVDVEGVEGEPVEGVFIRAPWVESVGAAAEVLAEHDGHIVAVRQGNALATSFHPELTGDHRVHRLFADMVRANRAAQSL.

G50–S52 contacts L-glutamine. Catalysis depends on C82, which acts as the Nucleophile. Residues R111 and I140 to R141 each bind L-glutamine. Catalysis depends on charge relay system residues H176 and E178.

This sequence belongs to the glutaminase PdxT/SNO family. In the presence of PdxS, forms a dodecamer of heterodimers. Only shows activity in the heterodimer.

It catalyses the reaction aldehydo-D-ribose 5-phosphate + D-glyceraldehyde 3-phosphate + L-glutamine = pyridoxal 5'-phosphate + L-glutamate + phosphate + 3 H2O + H(+). The enzyme catalyses L-glutamine + H2O = L-glutamate + NH4(+). Its pathway is cofactor biosynthesis; pyridoxal 5'-phosphate biosynthesis. Its function is as follows. Catalyzes the hydrolysis of glutamine to glutamate and ammonia as part of the biosynthesis of pyridoxal 5'-phosphate. The resulting ammonia molecule is channeled to the active site of PdxS. The protein is Pyridoxal 5'-phosphate synthase subunit PdxT of Streptomyces coelicolor (strain ATCC BAA-471 / A3(2) / M145).